The chain runs to 350 residues: Enoyl-[acyl-carrier-protein] reductase, mitochondrial (350 aa).

Residues 1–14 (MNSTRNIISLVRRY) constitute a mitochondrion transit peptide. Catalysis depends on tyrosine 69, which acts as the Proton donor. NADP(+) is bound by residues asparagine 143, 169 to 172 (NSMV), 192 to 194 (RDG), 261 to 264 (YGGM), 286 to 288 (FWL), and lysine 343.

The protein belongs to the zinc-containing alcohol dehydrogenase family. Quinone oxidoreductase subfamily. In terms of assembly, homodimer.

The protein localises to the mitochondrion. It catalyses the reaction a 2,3-saturated acyl-[ACP] + NADP(+) = a (2E)-enoyl-[ACP] + NADPH + H(+). Catalyzes the NADPH-dependent reduction of trans-2-enoyl thioesters in mitochondrial fatty acid synthesis (fatty acid synthesis type II). Fatty acid chain elongation in mitochondria uses acyl carrier protein (ACP) as an acyl group carrier, but the enzyme accepts both ACP and CoA thioesters as substrates in vitro. This is Enoyl-[acyl-carrier-protein] reductase, mitochondrial (mecr) from Dictyostelium discoideum (Social amoeba).